Here is a 370-residue protein sequence, read N- to C-terminus: Chorismate synthase (370 aa).

Residue arginine 48 coordinates NADP(+). FMN contacts are provided by residues arginine 125 to serine 127, asparagine 241 to alanine 242, glycine 286, lysine 301 to serine 305, and arginine 327.

Belongs to the chorismate synthase family. Homotetramer. FMNH2 serves as cofactor.

It catalyses the reaction 5-O-(1-carboxyvinyl)-3-phosphoshikimate = chorismate + phosphate. The protein operates within metabolic intermediate biosynthesis; chorismate biosynthesis; chorismate from D-erythrose 4-phosphate and phosphoenolpyruvate: step 7/7. In terms of biological role, catalyzes the anti-1,4-elimination of the C-3 phosphate and the C-6 proR hydrogen from 5-enolpyruvylshikimate-3-phosphate (EPSP) to yield chorismate, which is the branch point compound that serves as the starting substrate for the three terminal pathways of aromatic amino acid biosynthesis. This reaction introduces a second double bond into the aromatic ring system. The chain is Chorismate synthase from Ruegeria sp. (strain TM1040) (Silicibacter sp.).